Here is a 558-residue protein sequence, read N- to C-terminus: MFMVRLKFASISHNFSTVAAKHRRVPSKYKSLAIGKAQQAITDYLHTTRSLSYTHAEQIASNASVSIRNLILKLDFSVPTFSKSLRKHLSYHPINEFEFFFESIGIDYSEVSEFLPEKKFFFSEDRTVLDAAFALSGFGFPWNKLGKLYKEERLVFVQRPGEIESRLLKFKDIGFSTVAVIGTCLAIPRTLCGGGELGSEIRCLFVKLKRLFDEFDSHHLFEENVDSWLAVSRKIRIFYDLGCENEEMWELMCRNKSLFLEYSEEALMNKAGYFCRFGVSKEDAALLILRNPAIMNFDLEKPVISVTGMLKHFGLRQDEVDAVAQKYPYVFGRNQLKNLPYVLRAIDLHERIFDILKNGNHHLLASYTLMDPDEDLEREYQEGLEELQNSRTKRHNIQKLDFLHEIGFGENGITMKVLQHVHGTAVELHDRFQILLNSGIIFSKICMLIRSAPKILNQKPHSIQDKLRFLCGEMGDSLDYLEVFPAYLCFDLENRISPRFRFHKWLVEKGFSEKSYSIASIVATSEKAFIARLYGIHPAIPKHWFERFSSRKTRDTVS.

A mitochondrion-targeting transit peptide spans 1–58 (MFMVRLKFASISHNFSTVAAKHRRVPSKYKSLAIGKAQQAITDYLHTTRSLSYTHAEQ).

It belongs to the mTERF family.

It localises to the mitochondrion. Functionally, transcription termination factor involved in the regulation of mitochondrial-encoded gene expression. Essential for normal plant growth and development. This is Transcription termination factor MTEF18, mitochondrial from Arabidopsis thaliana (Mouse-ear cress).